The primary structure comprises 284 residues: Elongation factor Ts (284 aa).

An involved in Mg(2+) ion dislocation from EF-Tu region spans residues 80-83 (TDFV).

This sequence belongs to the EF-Ts family.

It is found in the cytoplasm. Its function is as follows. Associates with the EF-Tu.GDP complex and induces the exchange of GDP to GTP. It remains bound to the aminoacyl-tRNA.EF-Tu.GTP complex up to the GTP hydrolysis stage on the ribosome. In Neisseria gonorrhoeae (strain ATCC 700825 / FA 1090), this protein is Elongation factor Ts.